A 226-amino-acid chain; its full sequence is MKKKKKNYTFNKKNKKIYNIKEAIQLLKNKKSAKFIESIDAAFNLNIDPKKSEQNVRGSVLLPHGTGNTIKIAVFTTGKNIKIAQLAGADYVGLEDLANLITNQKKKIDLVIASPETMHIVGKLGPILGPKGIMPNPKFGTITKDIKKAIQEAKKGKINYRNDKNGIIHSNFGKINFSEKELYENFLTLYQDIKKSQPNQFKGIYYKKINISTTMGPGIIIDHLSL.

It belongs to the universal ribosomal protein uL1 family. As to quaternary structure, part of the 50S ribosomal subunit.

Functionally, binds directly to 23S rRNA. The L1 stalk is quite mobile in the ribosome, and is involved in E site tRNA release. Its function is as follows. Protein L1 is also a translational repressor protein, it controls the translation of the L11 operon by binding to its mRNA. The chain is Large ribosomal subunit protein uL1 from Buchnera aphidicola subsp. Cinara cedri (strain Cc).